The following is a 286-amino-acid chain: Oxidase hkm6 (286 aa).

3 residues coordinate Cu cation: H16, H25, and H215.

It belongs to the tyrosinase family. Requires Cu(2+) as cofactor.

Its pathway is secondary metabolite biosynthesis. Oxidase; part of the gene cluster that mediates the biosynthesis of hancockiamides, an unusual new family of N-cinnamoylated piperazines. The NRPS hkm10 and the NmrA-like reductase hkm9 are proposed to convert two molecules of L-Phe to the intermediary piperazine called xenocockiamide A. Xenocockiamide A is then converted to hancockiamide D via a series of hydroxylations and O-methylations. The tyrosinase hkm6 may catalyze an aromatic hydroxylation, then the 2-oxoglutarate-dependent Fe(II) dioxygenase hkm4 and the FAD-dependent phenol hydroxylase hkm7 may catalyze consecutive hydroxylations to install 2 more hydroxy groups, and the methyltransferase hkm8 probably catalyzes two methylations using 2 molecules of S-adenosyl-L-methionine (SAM). The NRPS hkm11 activates and transfers trans-cinnamate supplied by the PAL hkm12 to hancockiamide D and produces hancockiamide A. NRPS Hkm11 has the flexibility to tolerate the bulky hancockiamide G as a substrate and the absence of the acetyl-transferase hkm3 opens up the opportunity for hkm11 to introduce a second N-cinnamoyl moiety. The cytochrome P450 monooxygenase hkm5 catalyzes the methylenedioxy bridge formation, converting hancockiamide A into hancockiamide G. Hkm5 can also convert hancockiamide B into hancockiamide C, and hancockiamide D into hancockiamide H. The N-acetyltransferase hkm3 finally transfers an acetyl group to 1-N of piperazine, converting hancockiamide A into hancockiamide B and hancockiamide G into hancockiamide C. This Aspergillus hancockii protein is Oxidase hkm6.